A 1154-amino-acid chain; its full sequence is DNA-directed RNA polymerase, mitochondrial (1154 aa).

Residues 1-30 (MLRRKIQTYLSRSHIRRGLCGLRFFQTQRL) constitute a mitochondrion transit peptide. The interval 221 to 243 (ESENGKDQNGDSSLKEKQPDVET) is disordered. Positions 223–240 (ENGKDQNGDSSLKEKQPD) are enriched in basic and acidic residues. Catalysis depends on residues aspartate 821, lysine 890, and aspartate 1061.

The protein belongs to the phage and mitochondrial RNA polymerase family.

The protein localises to the mitochondrion. The enzyme catalyses RNA(n) + a ribonucleoside 5'-triphosphate = RNA(n+1) + diphosphate. In terms of biological role, DNA-dependent RNA polymerase catalyzes the transcription of DNA into RNA using the four ribonucleoside triphosphates as substrates. Combines in the mitochondrion with mitochondrial transcription factor mtf1 as a holoenzyme to recognize and initiate transcription at the core mitochondrial promoters. The protein is DNA-directed RNA polymerase, mitochondrial (rpo41) of Schizosaccharomyces pombe (strain 972 / ATCC 24843) (Fission yeast).